The chain runs to 137 residues: Basic phospholipase A2 beta-bungarotoxin A1 chain (137 aa).

The first 9 residues, A1–A9, serve as a signal peptide directing secretion. Positions A10 to L17 are excised as a propeptide. Intrachain disulfides connect C44/C136, C46/C62, C61/C117, C68/C110, C78/C103, and C96/C108. Residues Y45, G47, and G49 each contribute to the Ca(2+) site. H65 is a catalytic residue. D66 contacts Ca(2+). The active site involves D111.

This sequence belongs to the phospholipase A2 family. Group I subfamily. D49 sub-subfamily. Heterodimer; disulfide-linked. The A chain has phospholipase A2 activity and the B chain shows homology with the basic protease inhibitors. Ca(2+) is required as a cofactor. As to expression, expressed by the venom gland.

The protein localises to the secreted. The catalysed reaction is a 1,2-diacyl-sn-glycero-3-phosphocholine + H2O = a 1-acyl-sn-glycero-3-phosphocholine + a fatty acid + H(+). Its function is as follows. Snake venom phospholipase A2 (PLA2) that shows presynaptic neurotoxicity. The A chain has phospholipase activity. PLA2 catalyzes the calcium-dependent hydrolysis of the 2-acyl groups in 3-sn-phosphoglycerides. This chain is Basic phospholipase A2 beta-bungarotoxin A1 chain, found in Bungarus candidus (Malayan krait).